Reading from the N-terminus, the 285-residue chain is RNA polymerase sigma factor RpoH (285 aa).

The tract at residues 53-122 is sigma-70 factor domain-2; it reads LILSHLRFVI…IHEYVLRNWR (70 aa). An Interaction with polymerase core subunit RpoC motif is present at residues 77 to 80; the sequence is DLIQ. The interval 229–281 is sigma-70 factor domain-4; sequence ALLRLDERSRNIIRARWLDKKEKNTLQKIANNYGISAERVRQLEKNAMKKLKI. Residues 254–273 constitute a DNA-binding region (H-T-H motif); sequence LQKIANNYGISAERVRQLEK.

This sequence belongs to the sigma-70 factor family. RpoH subfamily. Interacts with the RNA polymerase core enzyme.

The protein resides in the cytoplasm. Sigma factors are initiation factors that promote the attachment of RNA polymerase to specific initiation sites and are then released. This sigma factor is involved in regulation of expression of heat shock genes. The protein is RNA polymerase sigma factor RpoH of Buchnera aphidicola subsp. Schizaphis graminum (strain Sg).